Reading from the N-terminus, the 325-residue chain is Glycerol-3-phosphate dehydrogenase [NAD(P)+] (325 aa).

Residues W11, R30, and K103 each coordinate NADPH. The sn-glycerol 3-phosphate site is built by K103, G131, and S133. A135 lines the NADPH pocket. Sn-glycerol 3-phosphate contacts are provided by K186, D242, S252, R253, and N254. K186 functions as the Proton acceptor in the catalytic mechanism. R253 provides a ligand contact to NADPH. The NADPH site is built by V279 and E281.

It belongs to the NAD-dependent glycerol-3-phosphate dehydrogenase family.

The protein resides in the cytoplasm. The enzyme catalyses sn-glycerol 3-phosphate + NAD(+) = dihydroxyacetone phosphate + NADH + H(+). It carries out the reaction sn-glycerol 3-phosphate + NADP(+) = dihydroxyacetone phosphate + NADPH + H(+). Its pathway is membrane lipid metabolism; glycerophospholipid metabolism. Catalyzes the reduction of the glycolytic intermediate dihydroxyacetone phosphate (DHAP) to sn-glycerol 3-phosphate (G3P), the key precursor for phospholipid synthesis. In Wolbachia pipientis subsp. Culex pipiens (strain wPip), this protein is Glycerol-3-phosphate dehydrogenase [NAD(P)+].